We begin with the raw amino-acid sequence, 620 residues long: Chaperone protein DnaK (620 aa).

Residues 579–620 (KAQKEASAGAEASEDASGPSSTGSASDDDVVDADYEVVDEDK) are disordered. Over residues 583–603 (EASAGAEASEDASGPSSTGSA) the composition is skewed to low complexity. The span at 604–620 (SDDDVVDADYEVVDEDK) shows a compositional bias: acidic residues.

The protein belongs to the heat shock protein 70 family.

In terms of biological role, acts as a chaperone. This is Chaperone protein DnaK from Methanococcoides burtonii (strain DSM 6242 / NBRC 107633 / OCM 468 / ACE-M).